Consider the following 436-residue polypeptide: Trigger factor (436 aa).

The PPIase FKBP-type domain maps to 161–246; that stretch reads EDQLNIDFVG…VNSVSEPKLP (86 aa).

The protein belongs to the FKBP-type PPIase family. Tig subfamily.

The protein localises to the cytoplasm. The catalysed reaction is [protein]-peptidylproline (omega=180) = [protein]-peptidylproline (omega=0). Functionally, involved in protein export. Acts as a chaperone by maintaining the newly synthesized protein in an open conformation. Functions as a peptidyl-prolyl cis-trans isomerase. The protein is Trigger factor of Pseudomonas fluorescens (strain SBW25).